The following is a 321-amino-acid chain: PI-PLC X domain-containing protein 3 (321 aa).

The PI-PLC X-box domain occupies 22 to 197; the sequence is SMHSIPLTNL…DYQVLVFYHS (176 aa). Residues His37 and His114 contribute to the active site.

In terms of tissue distribution, expressed at highest levels in heart. Also detected in kidney, lung, small intestine and colon. Expressed at very low levels, if any, in leukocytes, thymus and skeletal muscle.

Its subcellular location is the cytoplasm. The chain is PI-PLC X domain-containing protein 3 (PLCXD3) from Homo sapiens (Human).